The following is a 916-amino-acid chain: Chitin synthase B (916 aa).

2 disordered regions span residues 1 to 75 (MAYH…GYSL) and 118 to 141 (ARSE…GGNG). A compositionally biased stretch (basic and acidic residues) spans 14–26 (HTYDDGHQLRDLS). The segment covering 59-75 (RGLTASPVQRPTSGYSL) has biased composition (polar residues). The next 7 helical transmembrane spans lie at 544 to 561 (RWLN…MHFG), 588 to 608 (FLTW…MDLV), 629 to 649 (IINT…FILA), 664 to 684 (SFVA…YLVV), 716 to 736 (IIII…FMYL), 845 to 865 (LVTL…SEGL), and 884 to 904 (ALLW…TWFL).

Belongs to the chitin synthase family. Class III subfamily. In terms of assembly, interacts with kibesin kinA. Post-translationally, activity requires trypsin activation, suggesting a zymogenic nature. In terms of processing, phosphorylated at yet unidentified residues in a N-terminal disordered region-dependent manner.

The protein localises to the cell membrane. It is found in the cell tip. It localises to the cell septum. The catalysed reaction is [(1-&gt;4)-N-acetyl-beta-D-glucosaminyl](n) + UDP-N-acetyl-alpha-D-glucosamine = [(1-&gt;4)-N-acetyl-beta-D-glucosaminyl](n+1) + UDP + H(+). Activity is stimulated by Mg(2+) and is inhibited by polyoxin D. Its function is as follows. Polymerizes chitin, a structural polymer of the cell wall and septum, by transferring the sugar moiety of UDP-GlcNAc to the non-reducing end of the growing chitin polymer. Does not substantially contribute to the rigidity of the cell wall but is necessary for normal hyphal growth and organization. In addition to its functions in the formation of normal cell walls of hyphae, is also involved in conidiophore and conidia development. In Emericella nidulans (strain FGSC A4 / ATCC 38163 / CBS 112.46 / NRRL 194 / M139) (Aspergillus nidulans), this protein is Chitin synthase B.